The chain runs to 134 residues: Mini-ribonuclease 3 (134 aa).

Residue Asp22 is part of the active site.

It belongs to the MrnC RNase family. In terms of assembly, homodimer. Mg(2+) is required as a cofactor.

The protein localises to the cytoplasm. In terms of biological role, involved in correct processing of both the 5' and 3' ends of 23S rRNA precursor. Processes 30S rRNA precursor transcript even in absence of ribonuclease 3 (Rnc); Rnc processes 30S rRNA into smaller rRNA precursors. The sequence is that of Mini-ribonuclease 3 from Staphylococcus aureus (strain NCTC 8325 / PS 47).